Reading from the N-terminus, the 439-residue chain is MLTDRHKEVLKGLLAGILFYLSFSKLNLYFLVFPALFLGIRKNFLRLFSFGFSAFFLSLLWIRIPLIDYGNINPFIAYPALVLLVLFLSLYQFGLTYLLWRVFKFSFFAFPFLYTLVEILRSHLPYGGFPWLLLGVNLVDIPVLRYTLNAGTVFLGSFVVLLISLFPLFNKKEKIFSLAIITPLLIYGFIKETSYRVTHYGLKIALIQPFVPQDVKLNRELFELKYGEIIELVKKAVEKKPDLVVLPESAFPFYLGELEEKGKEILELSKKVPIITGFIEIDEGFKPYNTVVLLKDGRVIEKYRKIKLVPFGEYTPFPFKFFSKYVPYLSFEDYNRGNKVKCFQLNGFSIGTPVCFEVAYPFFVKSFGCEFIAVLTNDAWFRDSEGTFQHMKLARVRAIENEKFFLWVNNTGPSGIISPRGEVIKSIDYGSRGILLFSF.

Helical transmembrane passes span 13-33, 47-67, 75-95, 97-117, 149-169, and 175-195; these read LLAG…FLVF, LFSF…IPLI, FIAY…QFGL, YLLW…YTLV, NAGT…FPLF, and IFSL…ETSY. Positions 207–439 constitute a CN hydrolase domain; that stretch reads IQPFVPQDVK…GSRGILLFSF (233 aa). Glu-248 serves as the catalytic Proton acceptor. Lys-305 is an active-site residue. Cys-355 serves as the catalytic Nucleophile.

It belongs to the CN hydrolase family. Apolipoprotein N-acyltransferase subfamily.

The protein localises to the cell inner membrane. It catalyses the reaction N-terminal S-1,2-diacyl-sn-glyceryl-L-cysteinyl-[lipoprotein] + a glycerophospholipid = N-acyl-S-1,2-diacyl-sn-glyceryl-L-cysteinyl-[lipoprotein] + a 2-acyl-sn-glycero-3-phospholipid + H(+). Its pathway is protein modification; lipoprotein biosynthesis (N-acyl transfer). In terms of biological role, catalyzes the phospholipid dependent N-acylation of the N-terminal cysteine of apolipoprotein, the last step in lipoprotein maturation. This Aquifex aeolicus (strain VF5) protein is Apolipoprotein N-acyltransferase.